The following is a 727-amino-acid chain: E3 SUMO-protein ligase pli1 (727 aa).

One can recognise an SAP domain in the interval Glu-18–Ile-52. Positions Tyr-108 to Tyr-261 constitute a PINIT domain. The segment at Gln-290–Ser-371 adopts an SP-RING-type zinc-finger fold. Zn(2+)-binding residues include Cys-321, His-323, Cys-344, and Cys-347. Residues Ser-395 and Ser-396 each carry the phosphoserine modification. Disordered stretches follow at residues Glu-408–Ser-558 and Gln-706–Asp-727. 2 stretches are compositionally biased toward polar residues: residues Thr-417–Ser-435 and Val-459–Thr-494. Low complexity predominate over residues Ser-546–Ser-558.

Belongs to the PIAS family. Interacts with hus5/ubc9.

It localises to the nucleus. Its pathway is protein modification; protein sumoylation. Functionally, acts as an E3 ligase mediating SUMO/Smt3 attachment to other proteins. Involved in the maintenance of the centromere and in telomere length. Regulates recombination, via extension sumoylation, particularly within the heterochromatin repeats. This Schizosaccharomyces pombe (strain 972 / ATCC 24843) (Fission yeast) protein is E3 SUMO-protein ligase pli1 (pli1).